We begin with the raw amino-acid sequence, 26 residues long: Toxin b subunit alpha (26 aa).

Toxin b is a heterodimer composed of toxin alpha and toxin beta. As to expression, expressed by the venom gland.

The protein resides in the secreted. Binds to sodium channels (Nav) and affects the channel activation process. This chain is Toxin b subunit alpha, found in Androctonus crassicauda (Arabian fat-tailed scorpion).